A 437-amino-acid chain; its full sequence is GTPase Era, mitochondrial (437 aa).

The transit peptide at 1–20 (MAAPRRYFPGIVRALLGAWQ) directs the protein to the mitochondrion. Positions 112–330 (RVLRVVLLGA…QYLLTQAQPG (219 aa)) constitute an Era-type G domain. The segment at 120 to 127 (GAPNAGKS) is G1. Residue 120–127 (GAPNAGKS) participates in GTP binding. Residues 146–150 (HTTRC) are G2. Positions 167 to 170 (DTPG) are G3. 167-171 (DTPGI) provides a ligand contact to GTP. Ser-173 carries the post-translational modification Phosphoserine. 236–239 (NKVD) provides a ligand contact to GTP. Residues 236–239 (NKVD) are G4. The disordered stretch occupies residues 272–293 (SRPSTHCPGPETEDPNTHAVRS). The segment at 308–310 (LSA) is G5. Positions 360 to 437 (LPEEVPYSVQ…LLRLSVKLLK (78 aa)) constitute a KH type-2 domain.

Belongs to the TRAFAC class TrmE-Era-EngA-EngB-Septin-like GTPase superfamily. Era GTPase family.

The protein resides in the mitochondrion matrix. It is found in the mitochondrion inner membrane. Its function is as follows. Probable GTPase that plays a role in the mitochondrial ribosomal small subunit assembly. Specifically binds the 12S mitochondrial rRNA (12S mt-rRNA) to a 33 nucleotide section delineating the 3' terminal stem-loop region. May act as a chaperone that protects the 12S mt-rRNA on the 28S mitoribosomal subunit during ribosomal small subunit assembly. The polypeptide is GTPase Era, mitochondrial (Eral1) (Rattus norvegicus (Rat)).